The sequence spans 356 residues: Probable neutral protease 2 homolog TRV_06370 (356 aa).

Residues 1-17 form the signal peptide; that stretch reads MQFTALLAALGAPLALA. Residues 18 to 183 constitute a propeptide that is removed on maturation; it reads ASIPAAAHNH…DDSTGVIDKR (166 aa). Intrachain disulfides connect Cys-191/Cys-262 and Cys-269/Cys-287. Zn(2+) is bound at residue His-311. The active site involves Glu-312. Residues His-315 and Asp-326 each contribute to the Zn(2+) site.

The protein belongs to the peptidase M35 family. Zn(2+) serves as cofactor.

It is found in the secreted. It carries out the reaction Preferential cleavage of bonds with hydrophobic residues in P1'. Also 3-Asn-|-Gln-4 and 8-Gly-|-Ser-9 bonds in insulin B chain.. Functionally, probable secreted metalloprotease that shows high activities on basic nuclear substrates such as histone and protamine. May be involved in virulence. The sequence is that of Probable neutral protease 2 homolog TRV_06370 from Trichophyton verrucosum (strain HKI 0517).